The primary structure comprises 444 residues: Tubulin beta chain (444 aa).

8 residues coordinate GTP: glutamine 11, glutamate 69, serine 138, glycine 142, threonine 143, glycine 144, asparagine 204, and asparagine 226. Glutamate 69 provides a ligand contact to Mg(2+).

This sequence belongs to the tubulin family. Dimer of alpha and beta chains. A typical microtubule is a hollow water-filled tube with an outer diameter of 25 nm and an inner diameter of 15 nM. Alpha-beta heterodimers associate head-to-tail to form protofilaments running lengthwise along the microtubule wall with the beta-tubulin subunit facing the microtubule plus end conferring a structural polarity. Microtubules usually have 13 protofilaments but different protofilament numbers can be found in some organisms and specialized cells. Mg(2+) is required as a cofactor.

It is found in the cytoplasm. The protein localises to the cytoskeleton. Its function is as follows. Tubulin is the major constituent of microtubules, a cylinder consisting of laterally associated linear protofilaments composed of alpha- and beta-tubulin heterodimers. Microtubules grow by the addition of GTP-tubulin dimers to the microtubule end, where a stabilizing cap forms. Below the cap, tubulin dimers are in GDP-bound state, owing to GTPase activity of alpha-tubulin. The protein is Tubulin beta chain of Euplotoides octocarinatus (Freshwater ciliate).